The chain runs to 160 residues: Type IV major fimbrial protein FimA (160 aa).

A propeptide spans 1-7 (MKSLQKG) (leader sequence). The residue at position 8 (F8) is an N-methylphenylalanine. The chain crosses the membrane as a helical span at residues 8-28 (FTLIELMIVVAIIGILAAIAI).

The protein belongs to the N-Me-Phe pilin family. The pili are polar flexible filaments of about 5.4 nanometers diameter and 2.5 micrometers average length; they consist of only a single polypeptide chain arranged in a helical configuration of five subunits per turn in the assembled pilus.

It localises to the fimbrium. Its subcellular location is the membrane. Functionally, major component of the type IV fimbriae that plays an essential role in twitching motility, natural transformation, and protease secretion. The chain is Type IV major fimbrial protein FimA (fimA) from Dichelobacter nodosus (Bacteroides nodosus).